Reading from the N-terminus, the 295-residue chain is Trimeric intracellular cation channel type A (295 aa).

Topologically, residues 1-18 are lumenal; that stretch reads MEVLDVLNLGEIAQYFSK. A helical transmembrane segment spans residues 19–37; the sequence is MAMFPVFDVAYYIVSILYL. The Cytoplasmic segment spans residues 38-51; that stretch reads KYEPGAVEVSRRSP. Residues 52-75 form a helical membrane-spanning segment; that stretch reads VASWLCAMLYCFGSYILADIMLGV. G74 contacts Ca(2+). Residues 76–86 lie on the Lumenal side of the membrane; that stretch reads CPIDYFHNNSH. The chain crosses the membrane as a helical span at residues 87 to 106; sequence ILLASAVWYLIFFCPLNLFY. Residues 107 to 144 are Cytoplasmic-facing; sequence KCVAFMPVKLVLVALKEVVRTRKIAAGVHHAHHAYHHG. Positions 122 and 126 each coordinate a 1,2-diacyl-sn-glycero-3-phospho-(1D-myo-inositol-4,5-bisphosphate). A helical transmembrane segment spans residues 145–162; it reads WLIMVITGYVKGSGVALM. Residues 163 to 182 lie on the Lumenal side of the membrane; sequence SNFEQLLRGVWKPETNEVLN. Residues 183-199 traverse the membrane as a helical segment; it reads MSFPTKASLYGAILFTL. The Cytoplasmic portion of the chain corresponds to 200–210; it reads QEAHVLPVSKS. Residues 211–227 form a helical membrane-spanning segment; the sequence is TLICLFTLFMVSSKVFM. The Lumenal portion of the chain corresponds to 228 to 236; the sequence is TARHSHGSP. The helical transmembrane segment at 237–255 threads the bilayer; the sequence is FALIESWVCHVLFGSPLGT. Residues 256-295 lie on the Cytoplasmic side of the membrane; sequence EDAHDHHHAAPAAAPAPLSPAKNKEELSEGTRKRKSKKAE. The segment at 259–295 is disordered; the sequence is HDHHHAAPAAAPAPLSPAKNKEELSEGTRKRKSKKAE. Low complexity predominate over residues 265 to 276; sequence APAAAPAPLSPA. Over residues 277-286 the composition is skewed to basic and acidic residues; it reads KNKEELSEGT.

Belongs to the TMEM38 family. In terms of assembly, homotrimer; conformation seems to be controled by binding to diacylglycerol (DAG).

It is found in the sarcoplasmic reticulum membrane. It localises to the nucleus membrane. The enzyme catalyses K(+)(in) = K(+)(out). With respect to regulation, channel activity is activated by a change of voltage within the sarcoplasmic reticulum lumen and blocked by luminal high Ca(2+) levels. Its function is as follows. Intracellular monovalent cation channel required for maintenance of rapid intracellular calcium release. Acts as a potassium counter-ion channel that functions in synchronization with calcium release from intracellular stores. Opened by a change of voltage within the sarcoplasmic reticulum lumen. The sequence is that of Trimeric intracellular cation channel type A (tmem38a) from Danio rerio (Zebrafish).